The primary structure comprises 443 residues: Histidinol dehydrogenase (443 aa).

Residues Tyr-127, Gln-185, and Asn-208 each coordinate NAD(+). Substrate contacts are provided by Ser-234, Gln-256, and His-259. Residues Gln-256 and His-259 each coordinate Zn(2+). Catalysis depends on proton acceptor residues Glu-323 and His-324. Positions 324, 357, 411, and 416 each coordinate substrate. A Zn(2+)-binding site is contributed by Asp-357. A Zn(2+)-binding site is contributed by His-416.

Belongs to the histidinol dehydrogenase family. Zn(2+) serves as cofactor.

The enzyme catalyses L-histidinol + 2 NAD(+) + H2O = L-histidine + 2 NADH + 3 H(+). It participates in amino-acid biosynthesis; L-histidine biosynthesis; L-histidine from 5-phospho-alpha-D-ribose 1-diphosphate: step 9/9. Its function is as follows. Catalyzes the sequential NAD-dependent oxidations of L-histidinol to L-histidinaldehyde and then to L-histidine. The protein is Histidinol dehydrogenase of Photobacterium profundum (strain SS9).